Here is a 181-residue protein sequence, read N- to C-terminus: Oligoribonuclease (181 aa).

Residues 8–171 form the Exonuclease domain; that stretch reads LIWLDMEMTG…ADILESIEEM (164 aa). Tyr-129 is an active-site residue.

The protein belongs to the oligoribonuclease family.

The protein localises to the cytoplasm. Functionally, 3'-to-5' exoribonuclease specific for small oligoribonucleotides. In Chromobacterium violaceum (strain ATCC 12472 / DSM 30191 / JCM 1249 / CCUG 213 / NBRC 12614 / NCIMB 9131 / NCTC 9757 / MK), this protein is Oligoribonuclease.